Reading from the N-terminus, the 211-residue chain is Uracil phosphoribosyltransferase (211 aa).

5-phospho-alpha-D-ribose 1-diphosphate contacts are provided by residues Arg78, Arg103, and 130–138 (DPMLATGGT). Residues Ile196 and 201–203 (GDA) each bind uracil. Residue Asp202 coordinates 5-phospho-alpha-D-ribose 1-diphosphate.

The protein belongs to the UPRTase family. Mg(2+) is required as a cofactor.

The enzyme catalyses UMP + diphosphate = 5-phospho-alpha-D-ribose 1-diphosphate + uracil. It participates in pyrimidine metabolism; UMP biosynthesis via salvage pathway; UMP from uracil: step 1/1. Allosterically activated by GTP. Catalyzes the conversion of uracil and 5-phospho-alpha-D-ribose 1-diphosphate (PRPP) to UMP and diphosphate. The protein is Uracil phosphoribosyltransferase of Kineococcus radiotolerans (strain ATCC BAA-149 / DSM 14245 / SRS30216).